A 331-amino-acid polypeptide reads, in one-letter code: N-acetyl-alpha-D-glucosaminyl-diphospho-ditrans,octacis-undecaprenol 4-epimerase (331 aa).

NAD(+) contacts are provided by residues 13-14 (FV), 34-39 (QQSHFY), 47-48 (DV), Ser109, Tyr132, and Lys136. Residues Ser109 and Tyr132 each contribute to the substrate site. The active-site Proton acceptor is the Tyr132. Residues 183–184 (GK) and 199–201 (YVG) each bind substrate.

This sequence belongs to the NAD(P)-dependent epimerase/dehydratase family. The cofactor is NAD(+).

Its subcellular location is the cell membrane. The enzyme catalyses N-acetyl-alpha-D-glucosaminyl-di-trans,octa-cis-undecaprenyl diphosphate = N-acetyl-alpha-D-galactosaminyl-di-trans,octa-cis-undecaprenyl diphosphate. The protein operates within bacterial outer membrane biogenesis; LPS O-antigen biosynthesis. In terms of biological role, involved in biosynthesis of the repeating tetrasaccharide unit of the O-antigen. Catalyzes the reversible epimerization of the hydroxyl group at position C4 of undecaprenyl pyrophosphate-N-acetylglucosamine (UndPP-GlcNAc) to yield undecaprenyl pyrophosphate-N-acetylgalactosamine (UndPP-GalNAc). In Escherichia coli O157:H7, this protein is N-acetyl-alpha-D-glucosaminyl-diphospho-ditrans,octacis-undecaprenol 4-epimerase.